The sequence spans 254 residues: rRNA N-glycosylase sapovaccarin-S2 (254 aa).

This sequence belongs to the ribosome-inactivating protein family. Type 1 RIP subfamily. In terms of tissue distribution, expressed in seeds; most abundant in the perisperm.

The enzyme catalyses Endohydrolysis of the N-glycosidic bond at one specific adenosine on the 28S rRNA.. Exhibits N-glycosylase activity. Catalyzes the release of one adenine from a ribosome. Acts as a ribosome-inactivating protein and inhibits protein synthesis. Induces cell death in Huh-7 liver cells. May contribute to the protection against plant pests and predators or play a role in regulating the death of plant cells. The sequence is that of rRNA N-glycosylase sapovaccarin-S2 from Gypsophila vaccaria (Cow soapwort).